The sequence spans 593 residues: Tyrosine-protein phosphatase non-receptor type 11 (593 aa).

Position 2 is an N-acetylthreonine (Thr-2). SH2 domains lie at 6–102 and 112–216; these read WFHP…KYPL and WFHG…KQPL. Phosphotyrosine is present on residues Tyr-62 and Tyr-66. Positions 247–521 constitute a Tyrosine-protein phosphatase domain; the sequence is FWEEFETLQQ…RFIYMAVQHY (275 aa). Residues Asp-425, 459-465, and Gln-506 each bind substrate; that span reads CSAGIGR. Catalysis depends on Cys-459, which acts as the Phosphocysteine intermediate. Residues Tyr-542 and Tyr-580 each carry the phosphotyrosine; by PDGFR modification.

The protein belongs to the protein-tyrosine phosphatase family. Non-receptor class 2 subfamily. Interacts with CD84 and with phosphorylated SIT1 and MZPL1. Interacts with FCRL4, FCRL6 and ANKHD1. Interacts with GAREM1 (tyrosine phosphorylated); the interaction increases MAPK/ERK activity and does not affect the GRB2/SOS complex formation. Interacts with PTPNS1 and BCAR3. Interacts with phosphorylated LIME1. Interacts with SHB and INPP5D/SHIP1. Interacts with KIR2DL1; the interaction is enhanced by ARRB2. Interacts with GAB2. Interacts with TERT; the interaction retains TERT in the nucleus. Interacts with PECAM1 and FER. Interacts with EPHA2 (activated); participates in PTK2/FAK1 dephosphorylation in EPHA2 downstream signaling. Interacts with MILR1 (tyrosine phosphorylated). Interacts with FLT1 (tyrosine-phosphorylated), FLT3 (tyrosine-phosphorylated), FLT4 (tyrosine-phosphorylated), KIT and GRB2. Interacts with ROS1; mediates PTPN11 phosphorylation. Interacts with PDGFRA (tyrosine phosphorylated). Interacts with PDGFRB (tyrosine phosphorylated); this interaction increases the PTPN11 phosphatase activity. Interacts (via SH2 domain) with TEK/TIE2 (tyrosine phosphorylated). Interacts with CEACAM1 (via cytoplasmic domain); this interaction depends on the monomer/dimer equilibrium and is phosphorylation-dependent. Interacts with MPIG6B (via ITIM motif). Interacts with SIGLEC10. Interacts with Lilrb4a (when tyrosine phosphorylated). Interacts with SIGLEC10. Interacts with CLEC12B (via ITIM motif); this interaction triggers dephosphorylation and activation of PTPN11. Interacts (via SH2 domains) with NEDD9/CAS-L; the interaction is enhanced when NEDD9/CAS-L is tyrosine phosphorylated. Interacts with PIRB; when PIRB is phosphorylated by LYN at 'Tyr-794' and 'Tyr-824'. Post-translationally, phosphorylated on Tyr-542 and Tyr-580 upon receptor protein tyrosine kinase activation; which creates a binding site for GRB2 and other SH2-containing proteins. Phosphorylated upon activation of the receptor-type kinase FLT3. Phosphorylated by activated PDGFRB. Phosphorylated upon activation of the receptor-type kinase PDGFRA. In terms of tissue distribution, highly expressed in brain, heart and kidney.

The protein resides in the cytoplasm. The enzyme catalyses O-phospho-L-tyrosyl-[protein] + H2O = L-tyrosyl-[protein] + phosphate. Functionally, acts downstream of various receptor and cytoplasmic protein tyrosine kinases to participate in the signal transduction from the cell surface to the nucleus. Positively regulates MAPK signal transduction pathway. Dephosphorylates GAB1, ARHGAP35 and EGFR. Dephosphorylates ROCK2 at 'Tyr-722' resulting in stimulation of its RhoA binding activity. Dephosphorylates CDC73. Dephosphorylates SOX9 on tyrosine residues, leading to inactivate SOX9 and promote ossification. Dephosphorylates tyrosine-phosphorylated NEDD9/CAS-L. The polypeptide is Tyrosine-protein phosphatase non-receptor type 11 (Ptpn11) (Mus musculus (Mouse)).